Reading from the N-terminus, the 461-residue chain is Cysteine--tRNA ligase (461 aa).

Residue Cys-28 coordinates Zn(2+). The 'HIGH' region signature appears at 30 to 40; sequence ITIYDLCHIGH. Zn(2+) contacts are provided by Cys-209, His-234, and Glu-238. Positions 266–270 match the 'KMSKS' region motif; that stretch reads KMSKS. An ATP-binding site is contributed by Lys-269.

The protein belongs to the class-I aminoacyl-tRNA synthetase family. In terms of assembly, monomer. Zn(2+) serves as cofactor.

The protein resides in the cytoplasm. The enzyme catalyses tRNA(Cys) + L-cysteine + ATP = L-cysteinyl-tRNA(Cys) + AMP + diphosphate. This is Cysteine--tRNA ligase from Yersinia enterocolitica serotype O:8 / biotype 1B (strain NCTC 13174 / 8081).